Consider the following 494-residue polypeptide: Cysteine--tRNA ligase (494 aa).

Cys-29 lines the Zn(2+) pocket. The short motif at 31–41 (LTVSDDAHLGH) is the 'HIGH' region element. A disordered region spans residues 187–220 (KAGGVSPDDANTHRDDELPPLDGERGQTWASPWG). Over residues 196-211 (ANTHRDDELPPLDGER) the composition is skewed to basic and acidic residues. Zn(2+) contacts are provided by Cys-230, His-255, and Glu-259. A 'KMSKS' region motif is present at residues 287–291 (KMSSS).

It belongs to the class-I aminoacyl-tRNA synthetase family. Zn(2+) serves as cofactor.

The protein resides in the cytoplasm. The catalysed reaction is tRNA(Cys) + L-cysteine + ATP = L-cysteinyl-tRNA(Cys) + AMP + diphosphate. The sequence is that of Cysteine--tRNA ligase from Halobacterium salinarum (strain ATCC 700922 / JCM 11081 / NRC-1) (Halobacterium halobium).